A 391-amino-acid chain; its full sequence is Methionine import ATP-binding protein MetN 2 (391 aa).

The region spanning 44 to 280 (VHVGKVFATP…PRHGATRALL (237 aa)) is the ABC transporter domain. ATP is bound at residue 77-84 (GRSGAGKS).

Belongs to the ABC transporter superfamily. Methionine importer (TC 3.A.1.24) family. As to quaternary structure, the complex is composed of two ATP-binding proteins (MetN), two transmembrane proteins (MetI) and a solute-binding protein (MetQ).

It localises to the cell inner membrane. It carries out the reaction L-methionine(out) + ATP + H2O = L-methionine(in) + ADP + phosphate + H(+). The enzyme catalyses D-methionine(out) + ATP + H2O = D-methionine(in) + ADP + phosphate + H(+). Its function is as follows. Part of the ABC transporter complex MetNIQ involved in methionine import. Responsible for energy coupling to the transport system. This Burkholderia ambifaria (strain ATCC BAA-244 / DSM 16087 / CCUG 44356 / LMG 19182 / AMMD) (Burkholderia cepacia (strain AMMD)) protein is Methionine import ATP-binding protein MetN 2.